A 90-amino-acid polypeptide reads, in one-letter code: UPF0235 protein CPn_0497/CP_0257/CPj0497/CpB0517 (90 aa).

The protein belongs to the UPF0235 family.

The sequence is that of UPF0235 protein CPn_0497/CP_0257/CPj0497/CpB0517 from Chlamydia pneumoniae (Chlamydophila pneumoniae).